The chain runs to 82 residues: Beta-defensin 113 (82 aa).

A signal peptide spans 1–16 (MKILCIFLTFFFTVSC). 3 disulfides stabilise this stretch: Cys35/Cys61, Cys42/Cys56, and Cys46/Cys62.

It belongs to the beta-defensin family.

The protein resides in the secreted. Its function is as follows. Has antibacterial activity. This Pan troglodytes (Chimpanzee) protein is Beta-defensin 113 (DEFB113).